A 200-amino-acid polypeptide reads, in one-letter code: MAGFKQLSGLVVPLDAANVDTDAIIPKQFLQAITRVGFGKHLFHEWRYLDVDGTKPNPEFVLNYPQYQGATILLARKNLGCGSSREHAPWALADYGFKVMIAPSFADIFYNNSLNNHMLPIRLSEEEVEEIFQWVWANDGKQIHVDLEAMTVTVGDKVYHFELDEFRRHCLLNGLDNIGLTLQHEEKISAYEKNIPAFLR.

Belongs to the LeuD family. LeuD type 1 subfamily. As to quaternary structure, heterodimer of LeuC and LeuD.

The catalysed reaction is (2R,3S)-3-isopropylmalate = (2S)-2-isopropylmalate. The protein operates within amino-acid biosynthesis; L-leucine biosynthesis; L-leucine from 3-methyl-2-oxobutanoate: step 2/4. Its function is as follows. Catalyzes the isomerization between 2-isopropylmalate and 3-isopropylmalate, via the formation of 2-isopropylmaleate. The chain is 3-isopropylmalate dehydratase small subunit from Haemophilus influenzae (strain 86-028NP).